A 124-amino-acid chain; its full sequence is Small ribosomal subunit protein uS12 (124 aa).

Positions 105–124 (SGVNDRRQGRSKYGAKRPKS) are disordered. Basic residues predominate over residues 113-124 (GRSKYGAKRPKS).

This sequence belongs to the universal ribosomal protein uS12 family. In terms of assembly, part of the 30S ribosomal subunit. Contacts proteins S8 and S17. May interact with IF1 in the 30S initiation complex.

Functionally, with S4 and S5 plays an important role in translational accuracy. Its function is as follows. Interacts with and stabilizes bases of the 16S rRNA that are involved in tRNA selection in the A site and with the mRNA backbone. Located at the interface of the 30S and 50S subunits, it traverses the body of the 30S subunit contacting proteins on the other side and probably holding the rRNA structure together. The combined cluster of proteins S8, S12 and S17 appears to hold together the shoulder and platform of the 30S subunit. The sequence is that of Small ribosomal subunit protein uS12 from Idiomarina loihiensis (strain ATCC BAA-735 / DSM 15497 / L2-TR).